Consider the following 491-residue polypeptide: Leucine aminopeptidase 1 (491 aa).

Residues Lys-252 and Asp-257 each contribute to the Zn(2+) site. Lys-264 is an active-site residue. Zn(2+) is bound by residues Asp-275, Asp-334, and Glu-336. The active site involves Arg-338.

This sequence belongs to the peptidase M17 family. The cofactor is Zn(2+). Expressed in the buccal cavity, pharynx, anterior gut and rectum.

The enzyme catalyses Release of an N-terminal amino acid, Xaa-|-Yaa-, in which Xaa is preferably Leu, but may be other amino acids including Pro although not Arg or Lys, and Yaa may be Pro. Amino acid amides and methyl esters are also readily hydrolyzed, but rates on arylamides are exceedingly low.. In terms of biological role, probably acts as a digestive enzyme. This is Leucine aminopeptidase 1 (lap-1) from Caenorhabditis elegans.